The primary structure comprises 477 residues: Argininosuccinate synthase (477 aa).

Residues Ala17 to Ser25 and Ala43 each bind ATP. Tyr99 contacts L-citrulline. Residues Gly129 and Thr131 each contribute to the ATP site. L-aspartate-binding residues include Thr131, Asn135, and Asp136. Asn135 is a binding site for L-citrulline. Asp136 contacts ATP. 2 residues coordinate L-citrulline: Arg139 and Ser192. Position 194 (Asp194) interacts with ATP. Residues Thr201, Glu203, and Glu280 each contribute to the L-citrulline site. Residues Asp450–Asp477 form a disordered region. Residues Asp468 to Asp477 show a composition bias toward low complexity.

This sequence belongs to the argininosuccinate synthase family. Type 2 subfamily. As to quaternary structure, homotetramer.

The protein localises to the cytoplasm. It catalyses the reaction L-citrulline + L-aspartate + ATP = 2-(N(omega)-L-arginino)succinate + AMP + diphosphate + H(+). It functions in the pathway amino-acid biosynthesis; L-arginine biosynthesis; L-arginine from L-ornithine and carbamoyl phosphate: step 2/3. This chain is Argininosuccinate synthase, found in Nocardioides sp. (strain ATCC BAA-499 / JS614).